Here is a 164-residue protein sequence, read N- to C-terminus: Hoefavidin (164 aa).

Positions 1–22 are cleaved as a signal peptide; the sequence is MNKVLAIVLTITVAGFAQTAFA. An Avidin-like domain is found at 32–155; it reads KLLAGASNWV…GQDDFMQSVA (124 aa). Biotin contacts are provided by Asn42, Ser46, Tyr68, Asn70, and Gly76. Cys77 and Cys108 form a disulfide bridge. Biotin contacts are provided by Ser110, Thr112, and Asp148.

Belongs to the avidin/streptavidin family. In terms of assembly, exhibits a dynamic oligomeric assembly: the apo form exits as homooctamers, which dissociate into homodimers upon biotin binding. The X-ray structure of the intact hoefavidin reveals unique crystal packing generated by an octameric cylindrical structure wherein the C-terminal segments of each monomer are introduced into the entrance of the biotin-binding site of an adjacent non-canonical monomer.

It is found in the secreted. The exact role played by hoefavidin in the host organism is still obscure. Forms a strong non-covalent complex with biotin and 2-iminobiotin. The polypeptide is Hoefavidin (Hoeflea phototrophica (strain DSM 17068 / NCIMB 14078 / DFL-43)).